The primary structure comprises 485 residues: Glutamyl-tRNA(Gln) amidotransferase subunit A (485 aa).

Residues Lys-78 and Ser-153 each act as charge relay system in the active site. The active-site Acyl-ester intermediate is the Ser-177.

This sequence belongs to the amidase family. GatA subfamily. Heterotrimer of A, B and C subunits.

It catalyses the reaction L-glutamyl-tRNA(Gln) + L-glutamine + ATP + H2O = L-glutaminyl-tRNA(Gln) + L-glutamate + ADP + phosphate + H(+). Its function is as follows. Allows the formation of correctly charged Gln-tRNA(Gln) through the transamidation of misacylated Glu-tRNA(Gln) in organisms which lack glutaminyl-tRNA synthetase. The reaction takes place in the presence of glutamine and ATP through an activated gamma-phospho-Glu-tRNA(Gln). The chain is Glutamyl-tRNA(Gln) amidotransferase subunit A from Desulfotalea psychrophila (strain LSv54 / DSM 12343).